The sequence spans 281 residues: Clc-like protein 5 (281 aa).

4 helical membrane passes run 13–33 (LATL…TITP), 104–124 (VLIL…AVIF), 137–157 (IMLD…LIVF), and 184–204 (YYLA…AALV).

Belongs to the Clc family.

The protein resides in the membrane. The sequence is that of Clc-like protein 5 (clc-5) from Caenorhabditis elegans.